The chain runs to 238 residues: 1-(5-phosphoribosyl)-5-[(5-phosphoribosylamino)methylideneamino] imidazole-4-carboxamide isomerase (238 aa).

The Proton acceptor role is filled by Asp-8. Asp-129 serves as the catalytic Proton donor.

Belongs to the HisA/HisF family.

It is found in the cytoplasm. It catalyses the reaction 1-(5-phospho-beta-D-ribosyl)-5-[(5-phospho-beta-D-ribosylamino)methylideneamino]imidazole-4-carboxamide = 5-[(5-phospho-1-deoxy-D-ribulos-1-ylimino)methylamino]-1-(5-phospho-beta-D-ribosyl)imidazole-4-carboxamide. Its pathway is amino-acid biosynthesis; L-histidine biosynthesis; L-histidine from 5-phospho-alpha-D-ribose 1-diphosphate: step 4/9. The protein is 1-(5-phosphoribosyl)-5-[(5-phosphoribosylamino)methylideneamino] imidazole-4-carboxamide isomerase of Anaeromyxobacter sp. (strain Fw109-5).